We begin with the raw amino-acid sequence, 508 residues long: General transcription factor IIF subunit 1 (508 aa).

N-acetylalanine is present on A2. A Phosphothreonine modification is found at T156. The tract at residues 177 to 448 (MQQRRLKDQD…SSGDVQVTED (272 aa)) is disordered. Phosphoserine occurs at positions 217, 218, 221, and 224. Basic residues predominate over residues 232–251 (SKAKKKAPVTKAGRKKKKKK). Acidic residues-rich tracts occupy residues 255 to 270 (DEAF…EGQE) and 303 to 325 (EQSE…EEEE). T331 carries the post-translational modification Phosphothreonine. A compositionally biased stretch (acidic residues) spans 343 to 355 (DDSDSSEESDIDS). The span at 364–374 (AKKKTPPKRER) shows a compositional bias: basic residues. A phosphoserine mark is found at S377, S380, S381, and S385. Polar residues predominate over residues 378 to 388 (GGSSKGTSRPG). A Phosphothreonine modification is found at T389. Low complexity predominate over residues 389–406 (TPSAEAASTSSTLRAAAS). S391 carries the phosphoserine modification. At K407 the chain carries N6-acetyllysine. The segment covering 428 to 443 (GPQSLSGKSTPSSGDV) has biased composition (polar residues). Phosphoserine occurs at positions 431, 433, and 436. T437 carries the post-translational modification Phosphothreonine. Position 440 is a phosphoserine (S440).

Belongs to the TFIIF alpha subunit family. As to quaternary structure, heterodimer of an alpha and a beta subunit. Interacts with GTF2F2, CTDP1, TAF6/TAFII80 and URI1. Interacts with GTF2B (via C-terminus and preferentially via acetylated form); this interaction prevents binding of GTF2B to GTF2F2. Part of TBP-based Pol II pre-initiation complex (PIC), in which Pol II core assembles with general transcription factors and other specific initiation factors including GTF2E1, GTF2E2, GTF2F1, GTF2F2, TCEA1, ERCC2, ERCC3, GTF2H2, GTF2H3, GTF2H4, GTF2H5, GTF2A1, GTF2A2, GTF2B and TBP; this large multi-subunit PIC complex mediates DNA unwinding and targets Pol II core to the transcription start site where the first phosphodiester bond forms. In terms of processing, phosphorylated on Ser and other residues by TAF1 and casein kinase II-like kinases.

The protein resides in the nucleus. Its function is as follows. TFIIF is a general transcription initiation factor that binds to RNA polymerase II and helps to recruit it to the initiation complex in collaboration with TFIIB. It promotes transcription elongation. In Rattus norvegicus (Rat), this protein is General transcription factor IIF subunit 1 (Gtf2f1).